Here is a 125-residue protein sequence, read N- to C-terminus: MIELDFEKTGGLLPAICQDAETGEVLMLAFMNKESWEKTLETGMATYWSRSRQELWTKGLTSGNVQKVKEIRVDCDDDTILLKVEQIGGAACHTGHRSCFHKLVEGDKLTVVGEPVFDPKEVYKK.

Residue Asp-74 coordinates Mg(2+). Cys-75 provides a ligand contact to Zn(2+). Mg(2+) is bound by residues Asp-76 and Asp-78. The Zn(2+) site is built by Cys-92 and Cys-99.

This sequence belongs to the PRA-CH family. Homodimer. Mg(2+) is required as a cofactor. Requires Zn(2+) as cofactor.

It localises to the cytoplasm. The catalysed reaction is 1-(5-phospho-beta-D-ribosyl)-5'-AMP + H2O = 1-(5-phospho-beta-D-ribosyl)-5-[(5-phospho-beta-D-ribosylamino)methylideneamino]imidazole-4-carboxamide. The protein operates within amino-acid biosynthesis; L-histidine biosynthesis; L-histidine from 5-phospho-alpha-D-ribose 1-diphosphate: step 3/9. In terms of biological role, catalyzes the hydrolysis of the adenine ring of phosphoribosyl-AMP. The polypeptide is Phosphoribosyl-AMP cyclohydrolase (Desulfatibacillum aliphaticivorans).